The sequence spans 92 residues: Small ribosomal subunit protein uS19 (92 aa).

Belongs to the universal ribosomal protein uS19 family.

Functionally, protein S19 forms a complex with S13 that binds strongly to the 16S ribosomal RNA. The chain is Small ribosomal subunit protein uS19 from Acholeplasma laidlawii (strain PG-8A).